Here is a 303-residue protein sequence, read N- to C-terminus: Signal recognition particle receptor FtsY (303 aa).

GTP is bound by residues 108–115 (GVNGAGKT), 190–194 (DTAGR), and 254–257 (TKLD).

Belongs to the GTP-binding SRP family. FtsY subfamily. In terms of assembly, part of the signal recognition particle protein translocation system, which is composed of SRP and FtsY. SRP is a ribonucleoprotein composed of Ffh and a 4.5S RNA molecule.

The protein resides in the cell inner membrane. It localises to the cytoplasm. It carries out the reaction GTP + H2O = GDP + phosphate + H(+). Functionally, involved in targeting and insertion of nascent membrane proteins into the cytoplasmic membrane. Acts as a receptor for the complex formed by the signal recognition particle (SRP) and the ribosome-nascent chain (RNC). Interaction with SRP-RNC leads to the transfer of the RNC complex to the Sec translocase for insertion into the membrane, the hydrolysis of GTP by both Ffh and FtsY, and the dissociation of the SRP-FtsY complex into the individual components. The polypeptide is Signal recognition particle receptor FtsY (Rickettsia bellii (strain RML369-C)).